We begin with the raw amino-acid sequence, 345 residues long: Nicotinate-nucleotide--dimethylbenzimidazole phosphoribosyltransferase (345 aa).

The active-site Proton acceptor is the Glu-312.

It belongs to the CobT family.

The catalysed reaction is 5,6-dimethylbenzimidazole + nicotinate beta-D-ribonucleotide = alpha-ribazole 5'-phosphate + nicotinate + H(+). It functions in the pathway nucleoside biosynthesis; alpha-ribazole biosynthesis; alpha-ribazole from 5,6-dimethylbenzimidazole: step 1/2. Its function is as follows. Catalyzes the synthesis of alpha-ribazole-5'-phosphate from nicotinate mononucleotide (NAMN) and 5,6-dimethylbenzimidazole (DMB). The sequence is that of Nicotinate-nucleotide--dimethylbenzimidazole phosphoribosyltransferase from Bacteroides fragilis (strain YCH46).